Reading from the N-terminus, the 376-residue chain is N-acetyldiaminopimelate deacetylase (376 aa).

Asp69 is a catalytic residue. Catalysis depends on Glu128, which acts as the Proton acceptor.

This sequence belongs to the peptidase M20A family. N-acetyldiaminopimelate deacetylase subfamily.

The enzyme catalyses N-acetyl-(2S,6S)-2,6-diaminopimelate + H2O = (2S,6S)-2,6-diaminopimelate + acetate. Its pathway is amino-acid biosynthesis; L-lysine biosynthesis via DAP pathway; LL-2,6-diaminopimelate from (S)-tetrahydrodipicolinate (acetylase route): step 3/3. Catalyzes the conversion of N-acetyl-diaminopimelate to diaminopimelate and acetate. The polypeptide is N-acetyldiaminopimelate deacetylase (Bacillus mycoides (strain KBAB4) (Bacillus weihenstephanensis)).